The primary structure comprises 137 residues: Small integral membrane protein 9 (137 aa).

The N-terminal stretch at 1-23 (MKPLKLFCIGLLLCPLVCLLLET) is a signal peptide. Topologically, residues 24-84 (APPPSALLTL…NHLSDFFKSS (61 aa)) are extracellular. A helical membrane pass occupies residues 85–105 (IPPAAIFALFVTTAIMRAAIV). The Cytoplasmic portion of the chain corresponds to 106–137 (NKRLEEPHRQWTIDQRSSLEMQNMNLIKLFGG).

It localises to the cell membrane. The polypeptide is Small integral membrane protein 9 (Smim9) (Mus musculus (Mouse)).